The chain runs to 362 residues: Innexin-17 (362 aa).

4 consecutive transmembrane segments (helical) span residues 27–47 (YFTV…QYVG), 101–121 (WVPF…VIWN), 189–209 (FLAT…MGLG), and 266–286 (LFIA…FDIF).

It belongs to the pannexin family.

The protein resides in the cell membrane. The protein localises to the cell junction. Its subcellular location is the gap junction. Structural component of the gap junctions. This chain is Innexin-17, found in Caenorhabditis elegans.